The sequence spans 398 residues: Mitochondrial protein import protein mas5 (398 aa).

A J domain is found at 7–88 (GYYKVLELSP…KKKKEYDSGM (82 aa)). Residues 139 to 219 (GKVSKFNVRT…CNGAEYIQDK (81 aa)) form a CR-type zinc finger. A substrate-binding site is contributed by 144–146 (FNV). Residues Cys-152, Cys-155, Cys-166, Cys-169, Cys-192, Cys-195, Cys-207, and Cys-210 each coordinate Zn(2+). CXXCXGXG motif repeat units lie at residues 152–159 (CTTCDGKG), 166–173 (CKKCNGNG), 192–199 (CDGCDGSG), and 207–214 (CSTCNGAE). Residues 221 to 222 (MF) and 253 to 255 (VIF) contribute to the substrate site. The segment at 367–386 (FGSMPEPERDHEDASEEGAQ) is disordered.

Belongs to the DnaJ family. In terms of assembly, homodimer. Requires Zn(2+) as cofactor.

It is found in the cytoplasm. Its function is as follows. Probably involved in mitosomal protein import. This Encephalitozoon cuniculi (strain GB-M1) (Microsporidian parasite) protein is Mitochondrial protein import protein mas5 (MAS5).